Consider the following 191-residue polypeptide: Methylated-DNA--protein-cysteine methyltransferase (191 aa).

Positions 120 and 134 each coordinate DNA. Cys-151 acts as the Nucleophile; methyl group acceptor in catalysis.

This sequence belongs to the MGMT family.

It localises to the nucleus. The catalysed reaction is a 6-O-methyl-2'-deoxyguanosine in DNA + L-cysteinyl-[protein] = S-methyl-L-cysteinyl-[protein] + a 2'-deoxyguanosine in DNA. The enzyme catalyses a 4-O-methyl-thymidine in DNA + L-cysteinyl-[protein] = a thymidine in DNA + S-methyl-L-cysteinyl-[protein]. Involved in the cellular defense against the biological effects of O6-methylguanine (O6-MeG) and O4-methylthymine (O4-MeT) in DNA. Repairs the methylated nucleobase in DNA by stoichiometrically transferring the methyl group to a cysteine residue in the enzyme. This is a suicide reaction: the enzyme is irreversibly inactivated. In Debaryomyces hansenii (strain ATCC 36239 / CBS 767 / BCRC 21394 / JCM 1990 / NBRC 0083 / IGC 2968) (Yeast), this protein is Methylated-DNA--protein-cysteine methyltransferase (MGT1).